The chain runs to 347 residues: Zinc finger protein CONSTANS-LIKE 2 (347 aa).

Zn(2+) contacts are provided by C16, C19, C39, H44, C59, C62, C82, and H87. A B box-type 1; atypical zinc finger spans residues 16–58 (CDTCRSAACTVYCEADSAYLCTTCDARVHAANRVASRHERVRV). A B box-type 2; atypical zinc finger spans residues 59-101 (CQSCESAPAAFLCKADAASLCTACDAEIHSANPLARRHQRVPI). The 43-residue stretch at 278-320 (REARVLRYREKKKTRKFDKTIRYASRKAYAEIRPRIKGRFAKR) folds into the CCT domain.

The protein belongs to the CONSTANS family. As to expression, highly expressed in leaves. Expressed at lower levels in stems, flowers and siliques. Not detected in roots.

The protein resides in the nucleus. Functionally, putative transcription factor. Does not affect flowering time. This is Zinc finger protein CONSTANS-LIKE 2 (COL2) from Arabidopsis thaliana (Mouse-ear cress).